A 433-amino-acid polypeptide reads, in one-letter code: Glutamate-1-semialdehyde 2,1-aminomutase (433 aa).

N6-(pyridoxal phosphate)lysine is present on Lys-273.

It belongs to the class-III pyridoxal-phosphate-dependent aminotransferase family. HemL subfamily. In terms of assembly, homodimer. The cofactor is pyridoxal 5'-phosphate.

The protein localises to the cytoplasm. The catalysed reaction is (S)-4-amino-5-oxopentanoate = 5-aminolevulinate. It functions in the pathway porphyrin-containing compound metabolism; protoporphyrin-IX biosynthesis; 5-aminolevulinate from L-glutamyl-tRNA(Glu): step 2/2. The protein operates within porphyrin-containing compound metabolism; chlorophyll biosynthesis. The polypeptide is Glutamate-1-semialdehyde 2,1-aminomutase (hemL) (Synechocystis sp. (strain ATCC 27184 / PCC 6803 / Kazusa)).